Consider the following 264-residue polypeptide: Putative [LysW]-aminoadipate/[LysW]-glutamate kinase (264 aa).

Substrate contacts are provided by residues 34 to 35 (GG), arginine 61, and asparagine 169.

It belongs to the acetylglutamate kinase family. LysZ subfamily.

The protein localises to the cytoplasm. It catalyses the reaction [amino-group carrier protein]-C-terminal-N-(1,4-dicarboxybutan-1-yl)-L-glutamine + ATP = [amino-group carrier protein]-C-terminal-N-(1-carboxy-5-phosphooxy-5-oxopentan-1-yl)-L-glutamine + ADP. The catalysed reaction is [amino-group carrier protein]-C-terminal-gamma-(L-glutamyl)-L-glutamate + ATP = [amino-group carrier protein]-C-terminal-gamma-(5-phospho-L-glutamyl)-L-glutamate + ADP. The protein operates within amino-acid biosynthesis; L-lysine biosynthesis via AAA pathway; L-lysine from L-alpha-aminoadipate (Thermus route): step 2/5. It participates in amino-acid biosynthesis; L-arginine biosynthesis. Involved in both the arginine and lysine biosynthetic pathways. Phosphorylates the LysW-bound precursors glutamate (for arginine biosynthesis), respectively alpha-aminoadipate (for lysine biosynthesis). In Ignicoccus hospitalis (strain KIN4/I / DSM 18386 / JCM 14125), this protein is Putative [LysW]-aminoadipate/[LysW]-glutamate kinase.